The chain runs to 190 residues: Probable molybdenum cofactor guanylyltransferase (190 aa).

GTP-binding positions include 9-11 (LCG), lysine 21, aspartate 65, and aspartate 94. Aspartate 94 contacts Mg(2+).

This sequence belongs to the MobA family. The cofactor is Mg(2+).

It localises to the cytoplasm. It catalyses the reaction Mo-molybdopterin + GTP + H(+) = Mo-molybdopterin guanine dinucleotide + diphosphate. Functionally, transfers a GMP moiety from GTP to Mo-molybdopterin (Mo-MPT) cofactor (Moco or molybdenum cofactor) to form Mo-molybdopterin guanine dinucleotide (Mo-MGD) cofactor. The polypeptide is Probable molybdenum cofactor guanylyltransferase (Flavobacterium johnsoniae (strain ATCC 17061 / DSM 2064 / JCM 8514 / BCRC 14874 / CCUG 350202 / NBRC 14942 / NCIMB 11054 / UW101) (Cytophaga johnsonae)).